The sequence spans 727 residues: Glucans biosynthesis glucosyltransferase H (727 aa).

Residues 18 to 38 (SAMPNERPGAMEPQNLSKMPE) are disordered. 7 helical membrane passes run 58 to 78 (FLVVGGALLLSLFAIYEMGAV), 97 to 117 (VNFCWIALAFCSGIAGFLILL), 278 to 298 (LQQFAARIYGPVIGTGLGWWV), 408 to 428 (IMAYLSSPFWLMLILTGLMLA), 460 to 480 (LFYITMGVLFGPKIFGVLLLL), 496 to 516 (IFSVIFEVILSALIAPIMMFI), and 572 to 592 (LLAWMSPALIGLWIAVPISAW).

The protein belongs to the glycosyltransferase 2 family. OpgH subfamily.

It is found in the cell inner membrane. The protein operates within glycan metabolism; osmoregulated periplasmic glucan (OPG) biosynthesis. Involved in the biosynthesis of osmoregulated periplasmic glucans (OPGs). The polypeptide is Glucans biosynthesis glucosyltransferase H (Shewanella baltica (strain OS223)).